The chain runs to 242 residues: Biosynthetic peptidoglycan transglycosylase (242 aa).

The chain crosses the membrane as a helical span at residues 19 to 39; sequence LMVVLAVFWGGGIALFSVAPV.

The protein belongs to the glycosyltransferase 51 family.

The protein localises to the cell inner membrane. It carries out the reaction [GlcNAc-(1-&gt;4)-Mur2Ac(oyl-L-Ala-gamma-D-Glu-L-Lys-D-Ala-D-Ala)](n)-di-trans,octa-cis-undecaprenyl diphosphate + beta-D-GlcNAc-(1-&gt;4)-Mur2Ac(oyl-L-Ala-gamma-D-Glu-L-Lys-D-Ala-D-Ala)-di-trans,octa-cis-undecaprenyl diphosphate = [GlcNAc-(1-&gt;4)-Mur2Ac(oyl-L-Ala-gamma-D-Glu-L-Lys-D-Ala-D-Ala)](n+1)-di-trans,octa-cis-undecaprenyl diphosphate + di-trans,octa-cis-undecaprenyl diphosphate + H(+). Its pathway is cell wall biogenesis; peptidoglycan biosynthesis. In terms of biological role, peptidoglycan polymerase that catalyzes glycan chain elongation from lipid-linked precursors. The protein is Biosynthetic peptidoglycan transglycosylase of Escherichia coli (strain ATCC 8739 / DSM 1576 / NBRC 3972 / NCIMB 8545 / WDCM 00012 / Crooks).